A 192-amino-acid chain; its full sequence is Acireductone dioxygenase 2 (192 aa).

Residues H99, H101, E105, and H144 each coordinate Fe(2+). 4 residues coordinate Ni(2+): H99, H101, E105, and H144.

Belongs to the acireductone dioxygenase (ARD) family. Requires Fe(2+) as cofactor. Ni(2+) serves as cofactor.

The protein resides in the cytoplasm. The protein localises to the nucleus. It carries out the reaction 1,2-dihydroxy-5-(methylsulfanyl)pent-1-en-3-one + O2 = 4-methylsulfanyl-2-oxobutanoate + formate + 2 H(+). The catalysed reaction is 1,2-dihydroxy-5-(methylsulfanyl)pent-1-en-3-one + O2 = 3-(methylsulfanyl)propanoate + CO + formate + 2 H(+). It functions in the pathway amino-acid biosynthesis; L-methionine biosynthesis via salvage pathway; L-methionine from S-methyl-5-thio-alpha-D-ribose 1-phosphate: step 5/6. In terms of biological role, catalyzes 2 different reactions between oxygen and the acireductone 1,2-dihydroxy-3-keto-5-methylthiopentene (DHK-MTPene) depending upon the metal bound in the active site. Fe-containing acireductone dioxygenase (Fe-ARD) produces formate and 2-keto-4-methylthiobutyrate (KMTB), the alpha-ketoacid precursor of methionine in the methionine recycle pathway. Ni-containing acireductone dioxygenase (Ni-ARD) produces methylthiopropionate, carbon monoxide and formate, and does not lie on the methionine recycle pathway. This chain is Acireductone dioxygenase 2 (ARD2), found in Arabidopsis thaliana (Mouse-ear cress).